Here is a 384-residue protein sequence, read N- to C-terminus: CDP-diacylglycerol--serine O-phosphatidyltransferase (384 aa).

This sequence belongs to the CDP-alcohol phosphatidyltransferase class-I family.

Its subcellular location is the membrane. It catalyses the reaction a CDP-1,2-diacyl-sn-glycerol + L-serine = a 1,2-diacyl-sn-glycero-3-phospho-L-serine + CMP + H(+). Its pathway is phospholipid metabolism; phosphatidylethanolamine biosynthesis; phosphatidylethanolamine from CDP-diacylglycerol: step 1/2. The protein is CDP-diacylglycerol--serine O-phosphatidyltransferase (PSS) of Encephalitozoon cuniculi (strain GB-M1) (Microsporidian parasite).